A 1191-amino-acid chain; its full sequence is Rho GTPase-activating protein 20 (1191 aa).

Positions 1–23 (MEAMSPQQETLGGQPGRSSSLTG) are enriched in polar residues. The interval 1-45 (MEAMSPQQETLGGQPGRSSSLTGVSRLAGGSCTKKKMKTLAERRR) is disordered. Serine 46 is modified (phosphoserine). Residues 78-180 (SLVCSNRTLL…EQKDKWLSLL (103 aa)) enclose the PH domain. A Ras-associating domain is found at 194 to 295 (KSIPLKIFAK…TPFNLQEPFL (102 aa)). Positions 365 to 551 (ISLPNICEND…FLIENCLRIF (187 aa)) constitute a Rho-GAP domain. Phosphoserine occurs at positions 704 and 730. Disordered regions lie at residues 768 to 791 (SKKN…NHVK), 926 to 1014 (RLNL…SRPA), 1052 to 1123 (KKAK…RHCS), and 1140 to 1191 (HEEI…TKDI). Residues 934–961 (SYSSLSSPGTSPSGSSVSSQDSAFSQIS) show a composition bias toward low complexity. 2 stretches are compositionally biased toward polar residues: residues 962 to 981 (EHSV…TFQA) and 1103 to 1116 (PVQS…SPFQ). The span at 1182–1191 (IEDRYLTKDI) shows a compositional bias: basic and acidic residues.

Expressed predominantly in the brain. Lower expression is found in lymph nodes.

Functionally, GTPase activator for the Rho-type GTPases by converting them to an inactive GDP-bound state. This is Rho GTPase-activating protein 20 (ARHGAP20) from Homo sapiens (Human).